The chain runs to 432 residues: Luc7-like protein 3 (432 aa).

Methionine 1 carries the post-translational modification N-acetylmethionine. Phosphoserine is present on residues serine 3, serine 110, and serine 115. Residues 124–181 (KNEEKIQVLTDKIDVLLQQIEELGSEGKVEEAQGMMKLVEQLKEERELLRSTTSTIES) are a coiled coil. The residue at position 231 (lysine 231) is an N6-acetyllysine. Basic and acidic residues predominate over residues 234–287 (LRKRTEEPDRDERLKKEKQEREEREKEREREREERERKRRREEEEREKERARDR). Positions 234-432 (LRKRTEEPDR…IKSEGDTQSN (199 aa)) are disordered. Basic residues predominate over residues 288–301 (ERRKRSRSRSRHSS). Residues 302–311 (RTSDRRCSRS) show a composition bias toward basic and acidic residues. The span at 312-367 (RDHKRSRSRERRRSRSRDRRRSRSHDRSERKHRSRSRDRRRSKSRDRKSYKHRSKS) shows a compositional bias: basic residues. Residues 368 to 414 (RDREQDRKSKEKEKRGSDDKKSSVKSGSREKQSEDTNTESKESDTKN) show a composition bias toward basic and acidic residues. Serine 420 bears the Phosphoserine mark. A compositionally biased stretch (basic and acidic residues) spans 421–432 (EDIKSEGDTQSN). A Glycyl lysine isopeptide (Lys-Gly) (interchain with G-Cter in SUMO1); alternate cross-link involves residue lysine 424. Lysine 424 participates in a covalent cross-link: Glycyl lysine isopeptide (Lys-Gly) (interchain with G-Cter in SUMO2); alternate. Phosphoserine is present on residues serine 425 and serine 431.

It belongs to the Luc7 family. In terms of assembly, may interact with SFRS1 and form homodimers. Interacts with JMJD6. Interacts with RBM25. Interacts with RSRC1 (via Arg/Ser-rich domain). Interacts with RRP1B. Phosphorylated in vitro by SRPK1, SRPK2 and CLK1. As to expression, widely expressed. Highest levels in heart, brain, pancreas, thymus, ovary, small intestine and peripheral blood leukocytes, as well as cerebellum, putamen and pituitary gland. Lowest levels in lung, liver and kidney. Also expressed in fetal tissues, including brain, heart, kidney, thymus and lung.

The protein localises to the nucleus speckle. Functionally, binds cAMP regulatory element DNA sequence. May play a role in RNA splicing. The protein is Luc7-like protein 3 (LUC7L3) of Homo sapiens (Human).